The following is a 337-amino-acid chain: U11/U12 small nuclear ribonucleoprotein 48 kDa protein (337 aa).

A CHHC U11-48K-type zinc finger spans residues 55-82 (IAICPYDSNHRMPKSSLTKHMESCRLRK). Residues Cys-58, His-64, His-74, and Cys-78 each contribute to the Zn(2+) site. Glycyl lysine isopeptide (Lys-Gly) (interchain with G-Cter in SUMO2) cross-links involve residues Lys-87 and Lys-104. Positions 255–276 (HWQEEQGRAGDAAEKNEERRSA) are enriched in basic and acidic residues. Residues 255 to 337 (HWQEEQGRAG…HSHKRRKQKI (83 aa)) are disordered. A compositionally biased stretch (basic residues) spans 294–310 (RHRRARSRSPHKRKRNK). Over residues 311–326 (DKSSESRRRKERDGER) the composition is skewed to basic and acidic residues. Positions 327–337 (HHSHKRRKQKI) are enriched in basic residues.

In terms of assembly, component of the U11/U12 snRNPs that are part of the U12-type spliceosome. Not found in the major spliceosome.

The protein localises to the nucleus. Functionally, likely involved in U12-type 5' splice site recognition. The chain is U11/U12 small nuclear ribonucleoprotein 48 kDa protein (Snrnp48) from Mus musculus (Mouse).